The following is an 82-amino-acid chain: UPF0291 protein PEPE_0871 (82 aa).

The protein belongs to the UPF0291 family.

Its subcellular location is the cytoplasm. The chain is UPF0291 protein PEPE_0871 from Pediococcus pentosaceus (strain ATCC 25745 / CCUG 21536 / LMG 10740 / 183-1w).